Here is a 375-residue protein sequence, read N- to C-terminus: Erythronate-4-phosphate dehydrogenase (375 aa).

Residues Ser45 and Thr66 each contribute to the substrate site. NAD(+) is bound by residues Asp146 and Thr175. Residue Arg208 is part of the active site. Residue Asp232 participates in NAD(+) binding. Residue Glu237 is part of the active site. His254 (proton donor) is an active-site residue. Gly257 provides a ligand contact to NAD(+). A substrate-binding site is contributed by Tyr258.

This sequence belongs to the D-isomer specific 2-hydroxyacid dehydrogenase family. PdxB subfamily. In terms of assembly, homodimer.

The protein resides in the cytoplasm. It carries out the reaction 4-phospho-D-erythronate + NAD(+) = (R)-3-hydroxy-2-oxo-4-phosphooxybutanoate + NADH + H(+). It participates in cofactor biosynthesis; pyridoxine 5'-phosphate biosynthesis; pyridoxine 5'-phosphate from D-erythrose 4-phosphate: step 2/5. Its function is as follows. Catalyzes the oxidation of erythronate-4-phosphate to 3-hydroxy-2-oxo-4-phosphonooxybutanoate. The polypeptide is Erythronate-4-phosphate dehydrogenase (Yersinia enterocolitica serotype O:8 / biotype 1B (strain NCTC 13174 / 8081)).